A 281-amino-acid chain; its full sequence is Bifunctional protein FolD (281 aa).

163–165 (GRS) is a binding site for NADP(+).

This sequence belongs to the tetrahydrofolate dehydrogenase/cyclohydrolase family. Homodimer.

The catalysed reaction is (6R)-5,10-methylene-5,6,7,8-tetrahydrofolate + NADP(+) = (6R)-5,10-methenyltetrahydrofolate + NADPH. The enzyme catalyses (6R)-5,10-methenyltetrahydrofolate + H2O = (6R)-10-formyltetrahydrofolate + H(+). The protein operates within one-carbon metabolism; tetrahydrofolate interconversion. Its function is as follows. Catalyzes the oxidation of 5,10-methylenetetrahydrofolate to 5,10-methenyltetrahydrofolate and then the hydrolysis of 5,10-methenyltetrahydrofolate to 10-formyltetrahydrofolate. The polypeptide is Bifunctional protein FolD (Leuconostoc mesenteroides subsp. mesenteroides (strain ATCC 8293 / DSM 20343 / BCRC 11652 / CCM 1803 / JCM 6124 / NCDO 523 / NBRC 100496 / NCIMB 8023 / NCTC 12954 / NRRL B-1118 / 37Y)).